The following is a 301-amino-acid chain: ATP synthase gamma chain (301 aa).

The protein belongs to the ATPase gamma chain family. In terms of assembly, F-type ATPases have 2 components, CF(1) - the catalytic core - and CF(0) - the membrane proton channel. CF(1) has five subunits: alpha(3), beta(3), gamma(1), delta(1), epsilon(1). CF(0) has three main subunits: a, b and c.

It is found in the cell inner membrane. Produces ATP from ADP in the presence of a proton gradient across the membrane. The gamma chain is believed to be important in regulating ATPase activity and the flow of protons through the CF(0) complex. This chain is ATP synthase gamma chain, found in Bordetella pertussis (strain Tohama I / ATCC BAA-589 / NCTC 13251).